The following is an 82-amino-acid chain: Ice-structuring protein A (82 aa).

The first 23 residues, 1 to 23 (MALSLFTVGQLIFLFWTMRITEA), serve as a signal peptide directing secretion. The propeptide at 24–44 (SPDPAAKAAPAAAAAPAAAAP) is removed by a dipeptidylpeptidase. R81 carries the arginine amide modification.

Belongs to the type-I AFP family. As to expression, detected in liver and in blood serum (at protein level).

The protein resides in the secreted. Contributes to protect fish blood from freezing at subzero sea water temperatures. Lowers the blood freezing point. Binds to nascent ice crystals and prevents further growth. The protein is Ice-structuring protein A of Pseudopleuronectes americanus (Winter flounder).